Consider the following 815-residue polypeptide: Phosphate transporter PHO1-2 (815 aa).

The Cytoplasmic portion of the chain corresponds to 1-421; the sequence is MVKFSREYEA…QQPRNTHMIT (421 aa). One can recognise an SPX domain in the interval 2–368; sequence VKFSREYEAS…EQQRATDLFS (367 aa). Disordered regions lie at residues 83 to 108, 166 to 213, and 242 to 266; these read SAGQ…STDK, RGLA…LELQ, and AGKK…GGGG. Residues 97–108 show a composition bias toward basic and acidic residues; it reads PDRGELVRSTDK. A compositionally biased stretch (low complexity) spans 183-201; the sequence is PPSSVHGSSGRYLLSGLSS. A compositionally biased stretch (polar residues) spans 202–213; it reads PQSMSDGSLELQ. Over residues 243–254 the composition is skewed to basic and acidic residues; the sequence is GKKDGKTKDGSG. A compositionally biased stretch (gly residues) spans 255–266; sequence KGRGGGGGGGGG. A helical membrane pass occupies residues 422–442; it reads FLVGLFTGTFVSLFIIYAILA. Topologically, residues 443–458 are extracellular; that stretch reads HVSGIFTSTGNSAYME. Residues 459–479 form a helical membrane-spanning segment; sequence IVYHVFSMFALISLHIFLYGC. The Cytoplasmic segment spans residues 480–508; sequence NLFMWKNTRINHNFIFDFSSNTALTHRDA. The chain crosses the membrane as a helical span at residues 509–529; the sequence is FLMSASIMCTVVAALVINLFL. Topologically, residues 530 to 538 are extracellular; the sequence is KNAGVAYAN. A helical transmembrane segment spans residues 539-559; the sequence is ALPGALLLLSTGVLFCPFDIF. Topologically, residues 560–686 are cytoplasmic; sequence YRSTRYCFMR…VRFKYAATPT (127 aa). The region spanning 624–815 is the EXS domain; the sequence is TSGQQYKHLA…PLPFRELETD (192 aa). Residues 687 to 707 traverse the membrane as a helical segment; it reads PFWVWMVIISSSGATIYQLYW. Over 708-734 the chain is Extracellular; the sequence is DFVKDWGFLNPKSKNRWLRNELILKNK. The helical transmembrane segment at 735 to 751 threads the bilayer; sequence SIYYVSMMLNLALRLAW. At 752–815 the chain is on the cytoplasmic side; sequence TESVMKIHIG…PLPFRELETD (64 aa).

This sequence belongs to the SYG1 (TC 2.A.94) family. As to expression, specifically expressed in roots.

It localises to the cell membrane. Involved in the transfer of inorganic phosphate (Pi) from roots to shoots. This chain is Phosphate transporter PHO1-2 (PHO1-2), found in Oryza sativa subsp. japonica (Rice).